Consider the following 389-residue polypeptide: Succinate--CoA ligase [ADP-forming] subunit beta (389 aa).

An ATP-grasp domain is found at 9-236 (KELFAKHEVP…KDATDPLELK (228 aa)). ATP contacts are provided by residues lysine 45, 52 to 54 (GRG), serine 94, and glutamate 99. Residues asparagine 191 and aspartate 205 each coordinate Mg(2+). Substrate-binding positions include asparagine 256 and 318-320 (GIT).

This sequence belongs to the succinate/malate CoA ligase beta subunit family. As to quaternary structure, heterotetramer of two alpha and two beta subunits. Requires Mg(2+) as cofactor.

The catalysed reaction is succinate + ATP + CoA = succinyl-CoA + ADP + phosphate. The enzyme catalyses GTP + succinate + CoA = succinyl-CoA + GDP + phosphate. The protein operates within carbohydrate metabolism; tricarboxylic acid cycle; succinate from succinyl-CoA (ligase route): step 1/1. Its function is as follows. Succinyl-CoA synthetase functions in the citric acid cycle (TCA), coupling the hydrolysis of succinyl-CoA to the synthesis of either ATP or GTP and thus represents the only step of substrate-level phosphorylation in the TCA. The beta subunit provides nucleotide specificity of the enzyme and binds the substrate succinate, while the binding sites for coenzyme A and phosphate are found in the alpha subunit. The sequence is that of Succinate--CoA ligase [ADP-forming] subunit beta from Rhodococcus opacus (strain B4).